We begin with the raw amino-acid sequence, 526 residues long: Peptide chain release factor 3 (526 aa).

One can recognise a tr-type G domain in the interval 9 to 277; sequence DKRRTFAIIS…GIVEWAPKPL (269 aa). Residues 18–25, 86–90, and 140–143 each bind GTP; these read SHPDAGKT, DTPGH, and NKLD.

It belongs to the TRAFAC class translation factor GTPase superfamily. Classic translation factor GTPase family. PrfC subfamily.

It is found in the cytoplasm. Increases the formation of ribosomal termination complexes and stimulates activities of RF-1 and RF-2. It binds guanine nucleotides and has strong preference for UGA stop codons. It may interact directly with the ribosome. The stimulation of RF-1 and RF-2 is significantly reduced by GTP and GDP, but not by GMP. The polypeptide is Peptide chain release factor 3 (Shewanella sp. (strain ANA-3)).